Reading from the N-terminus, the 459-residue chain is Anthocyanidin 3-O-glucoside 2''-O-glucosyltransferase (459 aa).

Histidine 20 acts as the Proton acceptor in catalysis. Histidine 20 serves as a coordination point for an anthocyanidin. Aspartate 117 (charge relay) is an active-site residue. Residues threonine 138, valine 335, glutamine 337, histidine 352, tryptophan 355, serine 357, and glutamate 360 each coordinate UDP-alpha-D-glucose. Glycine 375 is a binding site for an anthocyanidin. Aspartate 376 and glutamine 377 together coordinate UDP-alpha-D-glucose.

It belongs to the UDP-glycosyltransferase family. Mainly expressed in the petals and tubes of flower buds at around 24 hours before flower opening.

The catalysed reaction is an anthocyanidin 3-O-beta-D-glucoside + UDP-alpha-D-glucose = an anthocyanidin 3-O-sophoroside + UDP + 2 H(+). It functions in the pathway pigment biosynthesis; anthocyanin biosynthesis. Its function is as follows. Glycosyltransferase that mediates the glucosylation of anthocyanidin 3-O-glucosides to yield anthocyanidin 3-O-sophorosides. 3-O-sophoroside derivatives are required for the bright blue or red color of flowers. This chain is Anthocyanidin 3-O-glucoside 2''-O-glucosyltransferase (3GGT), found in Ipomoea nil (Japanese morning glory).